An 812-amino-acid chain; its full sequence is Endogenous retrovirus group K member 18 Pol protein (812 aa).

Residues 57–245 (LEKGHIEPSF…TPFHYLGMQI (189 aa)) form the Reverse transcriptase domain. The short motif at 161-164 (LPQG) is the LPQG element. Residues 195–198 (YFDD) carry the YXDD motif. The RNase H type-1 domain maps to 460–590 (LENALTVFTD…ADLLVSSAFI (131 aa)). The Mg(2+) site is built by Asp469, Glu497, Asp517, and Asp582. The segment at 587 to 628 (SAFIKAQELHALTHVNAAGLKNKFDVTWKQAKDIVQHCTQCQ) adopts an Integrase-type zinc-finger fold. Zn(2+)-binding residues include His596, His600, Cys624, and Cys627. The Integrase catalytic domain maps to 637–803 (AGVNPEVCVL…TSAEHLTGKK (167 aa)).

It belongs to the beta type-B retroviral polymerase family. HERV class-II K(HML-2) pol subfamily.

The catalysed reaction is DNA(n) + a 2'-deoxyribonucleoside 5'-triphosphate = DNA(n+1) + diphosphate. It catalyses the reaction Endonucleolytic cleavage to 5'-phosphomonoester.. Functionally, early post-infection, the reverse transcriptase converts the viral RNA genome into double-stranded viral DNA. The RNase H domain of the reverse transcriptase performs two functions. It degrades the RNA template and specifically removes the RNA primer from the RNA/DNA hybrid. Following nuclear import, the integrase catalyzes the insertion of the linear, double-stranded viral DNA into the host cell chromosome. Endogenous Pol proteins may have kept, lost or modified their original function during evolution. This is Endogenous retrovirus group K member 18 Pol protein (ERVK-18) from Homo sapiens (Human).